We begin with the raw amino-acid sequence, 943 residues long: Isoleucine--tRNA ligase (943 aa).

The 'HIGH' region signature appears at 59–69 (PYANGQIHLGH). An L-isoleucyl-5'-AMP-binding site is contributed by glutamate 577. The short motif at 618-622 (KMSKS) is the 'KMSKS' region element. Lysine 621 is a binding site for ATP. 4 residues coordinate Zn(2+): cysteine 906, cysteine 909, cysteine 926, and cysteine 929.

Belongs to the class-I aminoacyl-tRNA synthetase family. IleS type 1 subfamily. In terms of assembly, monomer. Zn(2+) serves as cofactor.

The protein resides in the cytoplasm. The enzyme catalyses tRNA(Ile) + L-isoleucine + ATP = L-isoleucyl-tRNA(Ile) + AMP + diphosphate. Its function is as follows. Catalyzes the attachment of isoleucine to tRNA(Ile). As IleRS can inadvertently accommodate and process structurally similar amino acids such as valine, to avoid such errors it has two additional distinct tRNA(Ile)-dependent editing activities. One activity is designated as 'pretransfer' editing and involves the hydrolysis of activated Val-AMP. The other activity is designated 'posttransfer' editing and involves deacylation of mischarged Val-tRNA(Ile). The sequence is that of Isoleucine--tRNA ligase from Xanthomonas axonopodis pv. citri (strain 306).